A 589-amino-acid polypeptide reads, in one-letter code: Isocitrate dehydrogenase kinase/phosphatase (589 aa).

ATP contacts are provided by residues 317 to 323 and Lys-338; that span reads AAGIKGM. Asp-373 is an active-site residue.

Belongs to the AceK family.

Its subcellular location is the cytoplasm. The catalysed reaction is L-seryl-[isocitrate dehydrogenase] + ATP = O-phospho-L-seryl-[isocitrate dehydrogenase] + ADP + H(+). In terms of biological role, bifunctional enzyme which can phosphorylate or dephosphorylate isocitrate dehydrogenase (IDH) on a specific serine residue. This is a regulatory mechanism which enables bacteria to bypass the Krebs cycle via the glyoxylate shunt in response to the source of carbon. When bacteria are grown on glucose, IDH is fully active and unphosphorylated, but when grown on acetate or ethanol, the activity of IDH declines drastically concomitant with its phosphorylation. This is Isocitrate dehydrogenase kinase/phosphatase from Colwellia psychrerythraea (strain 34H / ATCC BAA-681) (Vibrio psychroerythus).